We begin with the raw amino-acid sequence, 825 residues long: Probable inorganic carbon transporter subunit DabA (825 aa).

Cysteine 334, aspartate 336, histidine 521, and cysteine 536 together coordinate Zn(2+).

Belongs to the inorganic carbon transporter (TC 9.A.2) DabA family. As to quaternary structure, forms a complex with DabB. Requires Zn(2+) as cofactor.

Its subcellular location is the cell inner membrane. In terms of biological role, part of an energy-coupled inorganic carbon pump. The protein is Probable inorganic carbon transporter subunit DabA of Acidithiobacillus ferrooxidans (strain ATCC 23270 / DSM 14882 / CIP 104768 / NCIMB 8455) (Ferrobacillus ferrooxidans (strain ATCC 23270)).